The following is a 556-amino-acid chain: Adenine deaminase (556 aa).

This sequence belongs to the metallo-dependent hydrolases superfamily. Adenine deaminase family. The cofactor is Mn(2+).

The enzyme catalyses adenine + H2O + H(+) = hypoxanthine + NH4(+). This Methanocaldococcus jannaschii (strain ATCC 43067 / DSM 2661 / JAL-1 / JCM 10045 / NBRC 100440) (Methanococcus jannaschii) protein is Adenine deaminase.